A 7481-amino-acid chain; its full sequence is Polyketide synthase GfsA (7481 aa).

Residues 24–1020 (ASDEPIAVIG…ETAEFVRARL (997 aa)) are loading module (LM). One can recognise a Ketosynthase family 3 (KS3) 1 domain in the interval 26–451 (DEPIAVIGLS…GTNCHVVVSA (426 aa)). Positions 60-80 (RVPADRETPPSTEEESADGEA) are disordered. Residue Q197 is the For decarboxylation activity of LM of the active site. Residue S662 is the For acyltransferase activity of LM of the active site. The region spanning 945–1020 (PDPVETVRQL…ETAEFVRARL (76 aa)) is the Carrier 1 domain. O-(pantetheine 4'-phosphoryl)serine is present on S980. One can recognise a Ketosynthase family 3 (KS3) 2 domain in the interval 1038 to 1454 (DEPIAVVAMS…GTNAHVILEQ (417 aa)). 4 module regions span residues 1038 to 2517 (DEPI…AGEL), 2538 to 4063 (EDPI…LQRI), 4084 to 5636 (DDPI…GSEV), and 5655 to 7400 (DEPV…GEQL). Residues C1201, H1336, and H1376 each act as for beta-ketoacyl synthase 1 activity in the active site. A Carrier 2 domain is found at 2442–2517 (RVLLDLVRGR…ALAEHLAGEL (76 aa)). S2477 carries the post-translational modification O-(pantetheine 4'-phosphoryl)serine. The Ketosynthase family 3 (KS3) 3 domain occupies 2538-2964 (EDPIAIVAMS…GTNAHVIIEE (427 aa)). Catalysis depends on for beta-ketoacyl synthase 2 activity residues C2711, H2846, and H2886. The 76-residue stretch at 3988-4063 (QALQDLVLTE…ATTEYLLQRI (76 aa)) folds into the Carrier 3 domain. An O-(pantetheine 4'-phosphoryl)serine modification is found at S4023. The 431-residue stretch at 4084–4514 (DDPIAIVAMG…GTNAHVILEQ (431 aa)) folds into the Ketosynthase family 3 (KS3) 4 domain. Catalysis depends on for beta-ketoacyl synthase 3 activity residues C4261, H4396, and H4436. The 76-residue stretch at 5561–5636 (TALLDLIRGQ…ALAEYVGSEV (76 aa)) folds into the Carrier 4 domain. Residue S5596 is modified to O-(pantetheine 4'-phosphoryl)serine. Positions 5655-6081 (DEPVAIIGMS…GTNAHVILEQ (427 aa)) constitute a Ketosynthase family 3 (KS3) 5 domain. Catalysis depends on for beta-ketoacyl synthase 4 activity residues C5828, H5963, and H6003. The N-terminal hotdog fold stretch occupies residues 6561-6685 (HPLLGAAVAL…GVLASGAATV (125 aa)). Positions 6561-6841 (HPLLGAAVAL…LRPVSADTIA (281 aa)) constitute a PKS/mFAS DH domain. H6593 (proton acceptor; for dehydratase activity) is an active-site residue. The tract at residues 6700 to 6841 (ATAVDIDGLY…LRPVSADTIA (142 aa)) is C-terminal hotdog fold. The active-site Proton donor; for dehydratase activity is D6761. One can recognise a Carrier 5 domain in the interval 7325–7400 (QELLDFVCEH…LLAGHIGEQL (76 aa)). O-(pantetheine 4'-phosphoryl)serine is present on S7360.

As to quaternary structure, homodimer. The loading module (LM, residues 13-926) dimerizes. LM cross-links to its cognate acyl-carrier domain in a manner that seems physiological; mutation of residues in the 2 domains alters reactions efficiency in a manner predicted by the cross-linked crystal. The cofactor is pantetheine 4'-phosphate.

The protein operates within antibiotic biosynthesis. Functionally, first protein in the synthesis of the 16-membered macrolide antibiotics FD-891 and FD-892. Composed of 5 modules; the first is a loading module (LM) that synthesizes a starter unit used by the first elongation module for polyketide chain elongation. The starter unit is extended by multiple rounds of addition of malonyl-CoA or methylmalonyl-CoA, and other modifications to help generate the final products. The loading module (residues 1-927, LM with an inactive acyltransferase domain) preferentially decarboxylates malonyl-GfsA acyl carrier protein of the LM (ACP-LM) over methylmalonyl-GfsA ACP-LM and has no activity on malonyl-CoA or methymalonyl-CoA. LM decarboxylates malonyl-ACP-LM better than the malonyl-ACP-1 module of GfsA (i.e. the next module in the same protein) and has no activity on other malonyl-ACP modules. This Streptomyces halstedii protein is Polyketide synthase GfsA.